We begin with the raw amino-acid sequence, 78 residues long: Large ribosomal subunit protein bL28 (78 aa).

This sequence belongs to the bacterial ribosomal protein bL28 family.

This Gloeothece citriformis (strain PCC 7424) (Cyanothece sp. (strain PCC 7424)) protein is Large ribosomal subunit protein bL28.